Here is a 521-residue protein sequence, read N- to C-terminus: GMP synthase [glutamine-hydrolyzing] (521 aa).

One can recognise a Glutamine amidotransferase type-1 domain in the interval lysine 5–glycine 197. Catalysis depends on cysteine 81, which acts as the Nucleophile. Catalysis depends on residues histidine 171 and glutamate 173. One can recognise a GMPS ATP-PPase domain in the interval tryptophan 198–arginine 390. Residue serine 225–serine 231 participates in ATP binding.

As to quaternary structure, homodimer.

It carries out the reaction XMP + L-glutamine + ATP + H2O = GMP + L-glutamate + AMP + diphosphate + 2 H(+). It participates in purine metabolism; GMP biosynthesis; GMP from XMP (L-Gln route): step 1/1. In terms of biological role, catalyzes the synthesis of GMP from XMP. This is GMP synthase [glutamine-hydrolyzing] from Neisseria gonorrhoeae (strain NCCP11945).